The following is a 468-amino-acid chain: Cyclin-T1.1 (468 aa).

Residues lysine 336 to glycine 354 show a composition bias toward basic and acidic residues. The segment at lysine 336–glutamate 468 is disordered. A compositionally biased stretch (pro residues) spans alanine 387–isoleucine 402. Over residues serine 458 to glutamate 468 the composition is skewed to acidic residues.

This sequence belongs to the cyclin family. Cyclin C subfamily.

Its function is as follows. Regulatory subunit of the cyclin-dependent kinase pair (CDK9/cyclin T) complex, also called positive transcription elongation factor B (P-TEFb), which is proposed to facilitate the transition from abortive to production elongation by phosphorylating the CTD (carboxy-terminal domain) of the large subunit of RNA polymerase II (RNAP II). The chain is Cyclin-T1.1 from Caenorhabditis elegans.